The following is a 379-amino-acid chain: Galactose-1-phosphate uridylyltransferase (379 aa).

The segment covering 1 to 15 (MSQSGADPEQRQQAS) has biased composition (polar residues). The interval 1–20 (MSQSGADPEQRQQASEADAM) is disordered. Cys-75 serves as a coordination point for Zn(2+). UDP-alpha-D-glucose contacts are provided by residues Ala-81, 97-98 (ND), and Asn-173. His-184 is a binding site for Zn(2+). Residue His-186 is the Tele-UMP-histidine intermediate of the active site. Gln-188 serves as a coordination point for UDP-alpha-D-glucose. Residues Glu-202, His-301, His-319, and His-321 each contribute to the Zn(2+) site. UDP-alpha-D-glucose-binding positions include 334–337 (KFMV) and 339–340 (YE).

It belongs to the galactose-1-phosphate uridylyltransferase type 1 family. As to quaternary structure, homodimer. Zn(2+) is required as a cofactor.

It carries out the reaction alpha-D-galactose 1-phosphate + UDP-alpha-D-glucose = alpha-D-glucose 1-phosphate + UDP-alpha-D-galactose. Its pathway is carbohydrate metabolism; galactose metabolism. Functionally, plays an important role in galactose metabolism. The chain is Galactose-1-phosphate uridylyltransferase (Galt) from Rattus norvegicus (Rat).